A 515-amino-acid polypeptide reads, in one-letter code: Protein FAM98A (515 aa).

Disordered stretches follow at residues 297-410 (VLMG…GYHG) and 432-515 (SGYQ…HYTS). The segment covering 302 to 311 (VPDRGGRPNE) has biased composition (basic and acidic residues). A compositionally biased stretch (gly residues) spans 382–394 (WTDGGSGSGGGYQ). Residues 444–456 (RYQDGGHHGERGS) show a composition bias toward basic and acidic residues. Gly residues predominate over residues 457–481 (GRGGRGGRGGRGGRGSQGGGWGGRG). The span at 485–501 (YHQGGQFEQHFQHGGYQ) shows a compositional bias: low complexity. Residues 502 to 515 (YSHSGFGQGRHYTS) show a composition bias toward polar residues.

It belongs to the FAM98 family. In terms of assembly, interacts (via N- and C-terminus) with DDX1. Interacts (via N- and C-terminus) with C14orf166. Interacts with FAM98B. Interacts with PLEKHM1 (via N- and C-terminus).

In terms of biological role, positively stimulates PRMT1-induced protein arginine methylation. Involved in skeletal homeostasis. Positively regulates lysosome peripheral distribution and ruffled border formation in osteoclasts. The protein is Protein FAM98A of Mus musculus (Mouse).